The sequence spans 979 residues: Receptor-type tyrosine-protein phosphatase-like N (979 aa).

The N-terminal stretch at 1 to 34 is a signal peptide; the sequence is MRRPRRPGGLGGSGGLRLLLCLLLLSSRPGGCSA. The RESP18 homology domain stretch occupies residues 35-131; the sequence is VSAHGCLFDR…RPRDRSGLAP (97 aa). Topologically, residues 35–575 are lumenal; it reads VSAHGCLFDR…QTAHSTSPMR (541 aa). An intrachain disulfide couples Cys-53 to Cys-62. Basic and acidic residues-rich tracts occupy residues 112-127 and 304-323; these read RIPRLRPPEPRPRDRS and RAEDSPEGYEKEGLGDRGEK. Disordered regions lie at residues 112-173, 289-329, and 393-439; these read RIPR…SSSL, SRAR…SPAV, and VEGR…ARPP. Ser-308 bears the Phosphoserine mark. A compositionally biased stretch (low complexity) spans 415-433; it reads SPTSSEVQQVPSPVSSEPP. An O-linked (GalNAc...) threonine glycan is attached at Thr-441. The interval 449 to 575 is sufficient for dimerization of proICA512; the sequence is SPLGQSQPTV…QTAHSTSPMR (127 aa). 2 N-linked (GlcNAc...) asparagine glycosylation sites follow: Asn-506 and Asn-524. Residues 576-600 form a helical membrane-spanning segment; the sequence is SVLLTLVALAGVAGLLVALAVALCV. Residues 601-732 form a sufficient for dimerization of proICA512 region; sequence RQHARQQDKE…PNTCATAQGE (132 aa). At 601–979 the chain is on the cytoplasmic side; sequence RQHARQQDKE…VNAILKALPQ (379 aa). Positions 643 to 680 are disordered; that stretch reads NRAEGPPEPSRVSSVSSQFSDAAQASPSSHSSTPSWCE. The segment covering 652-677 has biased composition (low complexity); sequence SRVSSVSSQFSDAAQASPSSHSSTPS. Positions 709-969 constitute a Tyrosine-protein phosphatase domain; sequence LAKEWQALCA…EFALTAVAEE (261 aa). Residue Lys-754 forms a Glycyl lysine isopeptide (Lys-Gly) (interchain with G-Cter in SUMO) linkage.

This sequence belongs to the protein-tyrosine phosphatase family. Receptor class 8 subfamily. Homodimer; shown for the unprocessed protein (proICA512) in the endoplasmic reticulum and resolved during protein maturation as ICA512-TMF seems to be predominantly monomeric in secretory granules; however, ICA512-CCF interacts with ICA512-TMF disrupting the ICA512-TMF:SNTB2 complex. The isolated lumenal RESP18 homology domain has been shown to form disulfide-linked homooligomers. Interacts (via cytoplasmic domain) with phosphorylated SNTB2; this protects PTPRN against cleavage by CAPN1 to produce ICA512-CCF. Dephosphorylation of SNTB2 upon insulin stimulation disrupts the interaction and results in PTPRN cleavage. Interacts with SNX19. ICA512-CCF interacts with PIAS4; in the nucleus. Interacts with STAT5B (phosphorylated); down-regulated by ICA512-CCF sumoylation; ICA512-CCF prevents STAT5B dephosphorylation; ICA512-CCF mediates interaction of STAT5B with PIAS4. Interacts (via RESP18 homology domain) with insulin and proinsulin. Interacts with PTPRN2, PTPRA and PTPRE. Post-translationally, N-glycosylated. In terms of processing, O-glycosylated with core 1 or possibly core 8 glycans. Subject to proteolytic cleavage at multiple sites. Subject to cleavage on a pair of basic residues. On exocytosis of secretory granules in pancreatic beta-cells ICA512-TMF is transiently inserted in the plasma-membrane and cleaved by mu-type calpain CPN1 to yield ICA512-CCF. Post-translationally, sumoylated at two sites including Lys-754. Sumoylation decreases interaction with STAT5. As to expression, expression is restricted to neuroendocrine cells. Found in pancreas, brain and pituitary.

It localises to the membrane. Its subcellular location is the cytoplasmic vesicle. The protein localises to the secretory vesicle membrane. It is found in the perikaryon. The protein resides in the cell projection. It localises to the axon. Its subcellular location is the synapse. The protein localises to the cell membrane. It is found in the endosome. The protein resides in the nucleus. Functionally, plays a role in vesicle-mediated secretory processes. Required for normal accumulation of secretory vesicles in hippocampus, pituitary and pancreatic islets. Required for the accumulation of normal levels of insulin-containing vesicles and preventing their degradation. Plays a role in insulin secretion in response to glucose stimuli. Required for normal accumulation of the neurotransmitters norepinephrine, dopamine and serotonin in the brain. In females, but not in males, required for normal accumulation and secretion of pituitary hormones, such as luteinizing hormone (LH) and follicle-stimulating hormone (FSH). Required to maintain normal levels of renin expression and renin release. Seems to lack intrinsic enzyme activity. May regulate catalytic active protein-tyrosine phosphatases such as PTPRA through dimerization. ICA512-TMF regulates dynamics and exocytosis of insulin secretory granules (SGs); binding of ICA512-TMF to SNTB2/beta-2-syntrophin is proposed to restrain SGs mobility and exocytosis by tethering them to the actin cytoskeleton depending on UTRN; the function is inhibited by cytoplasmic ICA512-CFF dimerizing with ICA512-TMF and displacing SNTB2. Its function is as follows. ICA512-CCF translocated to the nucleus promotes expression of insulin and other granule-related genes; the function implicates binding to and regulating activity of STAT5B probably by preventing its dephosphorylation and potentially by inducing its sumoylation by recruiting PIAS4. Enhances pancreatic beta-cell proliferation by converging with signaling by STAT5B and STAT3. ICA512-CCF located in the cytoplasm regulates dynamics and exocytosis of insulin secretory granules (SGs) by dimerizing with ICA512-TMF and displacing SNTB2 thus enhancing SGs mobility and exocytosis. The sequence is that of Receptor-type tyrosine-protein phosphatase-like N (PTPRN) from Homo sapiens (Human).